We begin with the raw amino-acid sequence, 863 residues long: Potassium/sodium hyperpolarization-activated cyclic nucleotide-gated channel 2 (863 aa).

Gly residues predominate over residues 1 to 10 (MDARGGGGRP). Residues 1 to 131 (MDARGGGGRP…AGPAGEPRGS (131 aa)) are disordered. At 1–188 (MDARGGGGRP…PYSDFRFYWD (188 aa)) the chain is on the cytoplasmic side. Pro residues predominate over residues 17-47 (TPAPGPPPPPPPPAPPQPQPPPAPPPNPTTP). The span at 106–128 (GAASGPSAAEEAGSEEAGPAGEP) shows a compositional bias: low complexity. A phosphoserine mark is found at Ser119 and Ser134. An involved in subunit assembly region spans residues 131–182 (SQASFLQRQFGALLQPGVNKFSLRMFGSQKAVEREQERVKSAGAWIIHPYSD). Residues 189 to 209 (FTMLLFMVGNLIIIPVGITFF) form a helical membrane-spanning segment. Residues 210–213 (KDET) lie on the Extracellular side of the membrane. Residues 214–234 (TAPWIVFNVVSDTFFLMDLVL) form a helical membrane-spanning segment. At 235–261 (NFRTGIVIEDNTEIILDPEKIKKKYLR) the chain is on the cytoplasmic side. Residues 262–282 (TWFVVDFVSSIPVDYIFLIVE) traverse the membrane as a helical segment. Topologically, residues 283–290 (KGIDSEVY) are extracellular. A helical; Voltage-sensor transmembrane segment spans residues 291-311 (KTARALRIVRFTKILSLLRLL). At 312–342 (RLSRLIRYIHQWEEIFHMTYDLASAVMRICN) the chain is on the cytoplasmic side. A helical membrane pass occupies residues 343–363 (LISMMLLLCHWDGCLQFLVPM). At 364–386 (LQDFPSDCWVSINNMVNHSWSEL) the chain is on the extracellular side. Asn380 is a glycosylation site (N-linked (GlcNAc...) asparagine). Positions 387 to 408 (YSFALFKAMSHMLCIGYGRQAP) form an intramembrane region, pore-forming. Residues 409–413 (ESMTD) lie on the Extracellular side of the membrane. The helical transmembrane segment at 414–434 (IWLTMLSMIVGATCYAMFIGH) threads the bilayer. The Cytoplasmic segment spans residues 435 to 863 (ATALIQSLDS…SARSRLSSNL (429 aa)). 3',5'-cyclic AMP-binding residues include Gly581, Glu582, Cys584, Arg591, Thr592, and Arg632. At Ser641 the chain carries Phosphoserine; by PKG/PRKG2. A Phosphoserine modification is found at Ser726. Position 728 is an omega-N-methylarginine (Arg728). Positions 730–863 (VRRAPPGPLP…SARSRLSSNL (134 aa)) are disordered. The segment covering 734–755 (PPGPLPPAASPGPPAASPPAAP) has biased composition (pro residues). Phosphoserine occurs at positions 743, 750, and 757. 3 stretches are compositionally biased toward low complexity: residues 756–765 (SSPRAPRTSP), 778–800 (PALP…PSLP), and 808–834 (PAAS…AAPS). Residues Ser840, Ser842, and Ser847 each carry the phosphoserine modification.

This sequence belongs to the potassium channel HCN family. Homotetramer. The channel is composed of a homo- or heterotetrameric complex of pore-forming subunits. Heterotetramer with HCN1. Forms an obligate 4:4 complex with accessory subunit PEX5L; regulates HCN2 cell-surface expression and cyclic nucleotide dependence. Interacts with KCNE2. In terms of processing, S-palmitoylated. N-glycosylated; required for cell surface trafficking of HCN2. Post-translationally, phosphorylation at Ser-641 by PRKG2 shifts the voltage-dependence to more negative voltages, hence counteracting the stimulatory effect of cGMP on gating. Highly expressed in brain. Detected at low levels in heart, in ventricle, atrium and in sinoatrial node (SAN).

It is found in the cell membrane. The catalysed reaction is Na(+)(in) = Na(+)(out). It catalyses the reaction K(+)(in) = K(+)(out). The enzyme catalyses NH4(+)(in) = NH4(+)(out). With respect to regulation, activated by cAMP, and at 10-100 times higher concentrations, also by cGMP. cAMP binding causes a conformation change that leads to the assembly of an active tetramer and channel opening. In the absence of cAMP, the C-terminal region is thought to exert a tonic inhibition on the pore when HCN2 is in a non-tetrameric form. Channel activity is modulated by intracellular chloride ions and pH; acidic pH shifts the activation to more negative voltages. Phosphatidylinositol-4,5- bisphosphate (PIP(2)) acts as a ligand that allosterically opens HCN2 by shifting voltage-dependent channel activation toward depolarized potentials. Inhibited by extracellular cesium ions. Its function is as follows. Hyperpolarization-activated ion channel exhibiting weak selectivity for potassium over sodium ions. Contributes to the native pacemaker currents in heart (If) and in neurons (Ih). Can also transport ammonium in the distal nephron. Involved in the initiation of neuropathic pain in sensory neurons. The polypeptide is Potassium/sodium hyperpolarization-activated cyclic nucleotide-gated channel 2 (Mus musculus (Mouse)).